The primary structure comprises 130 residues: Small ribosomal subunit protein uS8 (130 aa).

It belongs to the universal ribosomal protein uS8 family. In terms of assembly, part of the 30S ribosomal subunit. Contacts proteins S5 and S12.

One of the primary rRNA binding proteins, it binds directly to 16S rRNA central domain where it helps coordinate assembly of the platform of the 30S subunit. This is Small ribosomal subunit protein uS8 from Marinobacter nauticus (strain ATCC 700491 / DSM 11845 / VT8) (Marinobacter aquaeolei).